We begin with the raw amino-acid sequence, 495 residues long: Dihydrolipoyl dehydrogenase, mitochondrial (495 aa).

FAD-binding positions include 59–68 (EKNATLGGTC), K77, and 169–171 (SGS). A disulfide bond links C68 and C73. NAD(+) contacts are provided by residues 206 to 213 (GAGVIGLE), E229, V264, and G299. FAD contacts are provided by residues D340 and 346–349 (MLAH). H472 acts as the Proton acceptor in catalysis.

This sequence belongs to the class-I pyridine nucleotide-disulfide oxidoreductase family. FAD is required as a cofactor.

It localises to the mitochondrion matrix. It carries out the reaction N(6)-[(R)-dihydrolipoyl]-L-lysyl-[protein] + NAD(+) = N(6)-[(R)-lipoyl]-L-lysyl-[protein] + NADH + H(+). The chain is Dihydrolipoyl dehydrogenase, mitochondrial (dld-1) from Caenorhabditis elegans.